The following is a 974-amino-acid chain: Coiled-coil domain-containing protein 146 (974 aa).

A disordered region spans residues 1–44 (MEDRSKYIAEESEDEEDEEQEEKEKKGGASTSTETEEDQEDIPS). A compositionally biased stretch (acidic residues) spans 10-21 (EESEDEEDEEQE). Residue Ser12 is modified to Phosphoserine. Coiled-coil stretches lie at residues 105-160 (VQLL…QERE), 195-340 (KLLK…TKEN), 421-474 (LPEQ…REVL), 512-660 (KKLE…NESG), 687-712 (QDIEIHILEEKIRFLKLKVAEKQRQI), and 767-848 (LTEE…ELSM).

In terms of assembly, interacts with CCDC38 and CCDC42. Interacts with intraflagellar transport proteins IFT20 and IFT88.

Its subcellular location is the cytoplasm. It localises to the cytoskeleton. It is found in the microtubule organizing center. The protein localises to the centrosome. The protein resides in the centriole. Its subcellular location is the cell projection. It localises to the cilium. It is found in the flagellum. The protein localises to the flagellum axoneme. The protein resides in the cilium basal body. Its subcellular location is the midbody. Its function is as follows. Essential for sperm flagellum biogenesis and male fertility. The polypeptide is Coiled-coil domain-containing protein 146 (Ccdc146) (Rattus norvegicus (Rat)).